We begin with the raw amino-acid sequence, 263 residues long: 3-methyl-2-oxobutanoate hydroxymethyltransferase (263 aa).

Mg(2+) is bound by residues Asp-45 and Asp-84. 3-methyl-2-oxobutanoate is bound by residues 45 to 46 (DS), Asp-84, and Lys-113. Residue Glu-115 coordinates Mg(2+). The Proton acceptor role is filled by Glu-182.

This sequence belongs to the PanB family. In terms of assembly, homodecamer; pentamer of dimers. Mg(2+) serves as cofactor.

It is found in the cytoplasm. It catalyses the reaction 3-methyl-2-oxobutanoate + (6R)-5,10-methylene-5,6,7,8-tetrahydrofolate + H2O = 2-dehydropantoate + (6S)-5,6,7,8-tetrahydrofolate. It participates in cofactor biosynthesis; coenzyme A biosynthesis. In terms of biological role, catalyzes the reversible reaction in which hydroxymethyl group from 5,10-methylenetetrahydrofolate is transferred onto alpha-ketoisovalerate to form ketopantoate. This Ignicoccus hospitalis (strain KIN4/I / DSM 18386 / JCM 14125) protein is 3-methyl-2-oxobutanoate hydroxymethyltransferase.